A 94-amino-acid chain; its full sequence is Cell division protein FtsB (94 aa).

Residues 1-3 (MRA) lie on the Cytoplasmic side of the membrane. The chain crosses the membrane as a helical span at residues 4 to 21 (FAVLLIIALGWLQYTLWF). The Periplasmic portion of the chain corresponds to 22–94 (GKNGMEDYAQ…YRIIDENSEE (73 aa)). Residues 40–60 (EEVNQGLRNRNGQMFAEIDDL) adopt a coiled-coil conformation.

This sequence belongs to the FtsB family. As to quaternary structure, part of a complex composed of FtsB, FtsL and FtsQ.

The protein resides in the cell inner membrane. Functionally, essential cell division protein. May link together the upstream cell division proteins, which are predominantly cytoplasmic, with the downstream cell division proteins, which are predominantly periplasmic. This Aliivibrio salmonicida (strain LFI1238) (Vibrio salmonicida (strain LFI1238)) protein is Cell division protein FtsB.